Reading from the N-terminus, the 96-residue chain is Small ribosomal subunit protein bS21 (96 aa).

Positions 52-96 (RRARKQARKTAIREGLIAAPKPKARPVSPRRPAAPAPASSPVGAA) are disordered. Residues 69–96 (AAPKPKARPVSPRRPAAPAPASSPVGAA) show a composition bias toward low complexity.

It belongs to the bacterial ribosomal protein bS21 family.

This is Small ribosomal subunit protein bS21 from Methylobacterium nodulans (strain LMG 21967 / CNCM I-2342 / ORS 2060).